The primary structure comprises 455 residues: UDP-N-acetylmuramoylalanine--D-glutamate ligase (455 aa).

118–124 contributes to the ATP binding site; that stretch reads GSNAKST.

Belongs to the MurCDEF family.

It localises to the cytoplasm. It catalyses the reaction UDP-N-acetyl-alpha-D-muramoyl-L-alanine + D-glutamate + ATP = UDP-N-acetyl-alpha-D-muramoyl-L-alanyl-D-glutamate + ADP + phosphate + H(+). It functions in the pathway cell wall biogenesis; peptidoglycan biosynthesis. Its function is as follows. Cell wall formation. Catalyzes the addition of glutamate to the nucleotide precursor UDP-N-acetylmuramoyl-L-alanine (UMA). The sequence is that of UDP-N-acetylmuramoylalanine--D-glutamate ligase from Chromohalobacter salexigens (strain ATCC BAA-138 / DSM 3043 / CIP 106854 / NCIMB 13768 / 1H11).